Reading from the N-terminus, the 74-residue chain is Arabinogalactan protein 20 (74 aa).

A signal peptide spans 1–26 (MASRNSVAVIALFAFVFAVISPFAGA). Residue Q27 is modified to Pyrrolidone carboxylic acid. P31, P33, and P35 each carry 4-hydroxyproline. P31, P33, and P35 each carry an O-linked (Ara...) hydroxyproline glycan. Residue S37 is the site of GPI-anchor amidated serine attachment. Positions 38–74 (DGTSIDQGIAYLLMVVALVLTYLIHPLDASSSSYTFF) are cleaved as a propeptide — removed in mature form.

It belongs to the AG-peptide AGP family. Post-translationally, contains 4-hydroxyproline; hydroxylated on Pro-31, Pro-33 and Pro-35. O-glycosylated on hydroxyprolines; noncontiguous hydroxylproline residues are glycosylated with arabinogalactan.

The protein resides in the cell membrane. In terms of biological role, proteoglycan that seems to be implicated in diverse developmental roles such as differentiation, cell-cell recognition, embryogenesis and programmed cell death. This is Arabinogalactan protein 20 from Arabidopsis thaliana (Mouse-ear cress).